The primary structure comprises 180 residues: Large ribosomal subunit protein uL10 (180 aa).

The protein belongs to the universal ribosomal protein uL10 family. In terms of assembly, part of the ribosomal stalk of the 50S ribosomal subunit. The N-terminus interacts with L11 and the large rRNA to form the base of the stalk. The C-terminus forms an elongated spine to which L12 dimers bind in a sequential fashion forming a multimeric L10(L12)X complex.

Forms part of the ribosomal stalk, playing a central role in the interaction of the ribosome with GTP-bound translation factors. The chain is Large ribosomal subunit protein uL10 from Thermosipho africanus (strain TCF52B).